The chain runs to 552 residues: CTP synthase (552 aa).

Positions 1–267 (MAKFIFVTGG…AEQTLKLLRM (267 aa)) are amidoligase domain. Serine 13 lines the CTP pocket. Serine 13 is a binding site for UTP. ATP is bound by residues 14-19 (SIGKGI) and aspartate 71. The Mg(2+) site is built by aspartate 71 and glutamate 141. CTP-binding positions include 148–150 (DIE), 188–193 (KTKPTQ), and lysine 224. Residues 188-193 (KTKPTQ) and lysine 224 each bind UTP. The 243-residue stretch at 292 to 534 (DIAIVGKYVQ…IQAAGNHKSQ (243 aa)) folds into the Glutamine amidotransferase type-1 domain. L-glutamine is bound at residue glycine 354. The Nucleophile; for glutamine hydrolysis role is filled by cysteine 381. Residues 382 to 385 (LGMQ), glutamate 405, and arginine 462 each bind L-glutamine. Catalysis depends on residues histidine 507 and glutamate 509. Residues 533 to 552 (SQPISDELDNQSTEMSISLS) form a disordered region.

It belongs to the CTP synthase family. Homotetramer.

It catalyses the reaction UTP + L-glutamine + ATP + H2O = CTP + L-glutamate + ADP + phosphate + 2 H(+). The catalysed reaction is L-glutamine + H2O = L-glutamate + NH4(+). The enzyme catalyses UTP + NH4(+) + ATP = CTP + ADP + phosphate + 2 H(+). It functions in the pathway pyrimidine metabolism; CTP biosynthesis via de novo pathway; CTP from UDP: step 2/2. Allosterically activated by GTP, when glutamine is the substrate; GTP has no effect on the reaction when ammonia is the substrate. The allosteric effector GTP functions by stabilizing the protein conformation that binds the tetrahedral intermediate(s) formed during glutamine hydrolysis. Inhibited by the product CTP, via allosteric rather than competitive inhibition. Functionally, catalyzes the ATP-dependent amination of UTP to CTP with either L-glutamine or ammonia as the source of nitrogen. Regulates intracellular CTP levels through interactions with the four ribonucleotide triphosphates. The protein is CTP synthase of Picosynechococcus sp. (strain ATCC 27264 / PCC 7002 / PR-6) (Agmenellum quadruplicatum).